The chain runs to 279 residues: Mirror-image polydactyly gene 1 protein homolog (279 aa).

Over residues 1 to 11 (MNSEQSIRELG) the composition is skewed to basic and acidic residues. Residues 1–21 (MNSEQSIRELGNEVPSEDLEL) are disordered. Coiled-coil stretches lie at residues 65–169 (LNKE…MLEN) and 218–255 (AEEM…STNN). Residues 247-268 (KQNQTSTNNTKHPTAKNNQEHT) form a disordered region. Polar residues predominate over residues 248–263 (QNQTSTNNTKHPTAKN).

This is Mirror-image polydactyly gene 1 protein homolog (Mipol1) from Mus musculus (Mouse).